We begin with the raw amino-acid sequence, 1454 residues long: Serine/threonine-protein kinase VPS15 (1454 aa).

Glycine 2 carries the N-myristoyl glycine lipid modification. The Protein kinase domain maps to 27–300; sequence VHYVSQLNSS…LLNKYRGIFF (274 aa). Residues 33 to 41 and lysine 54 contribute to the ATP site; that span reads LNSSRFLKT. Aspartate 147 serves as the catalytic Proton acceptor. HEAT repeat units follow at residues 460–497, 576–613, 615–652, and 654–691; these read NKID…SVRK, KLIQ…FFGR, RTND…LLGT, and TLEQ…TGLI. WD repeat units lie at residues 1078 to 1118, 1126 to 1165, 1229 to 1268, 1275 to 1315, 1344 to 1382, and 1422 to 1454; these read NEPN…VGEV, DCSS…QESE, PRHG…LIRS, APIT…CQYA, RSLN…SSKA, and YHHD…GIFQ.

The protein belongs to the protein kinase superfamily. Ser/Thr protein kinase family. In terms of assembly, component of the autophagy-specific VPS34 PI3-kinase complex I composed of VPS15, VPS30, VPS34, ATG14 and ATG38; and of the VPS34 PI3-kinase complex II composed of VPS15, VPS30, VPS34 and VPS38. Interacts directly with ATG14 and GPA1. Interacts directly with VPS34. In terms of processing, autophosphorylated.

It is found in the golgi apparatus. The protein resides in the trans-Golgi network membrane. It localises to the endosome membrane. The catalysed reaction is L-seryl-[protein] + ATP = O-phospho-L-seryl-[protein] + ADP + H(+). The enzyme catalyses L-threonyl-[protein] + ATP = O-phospho-L-threonyl-[protein] + ADP + H(+). In terms of biological role, serine/threonine-protein kinase required for cytoplasm to vacuole transport (Cvt) and autophagy as a part of the autophagy-specific VPS34 PI3-kinase complex I. This complex is essential to recruit the ATG8-phosphatidylinositol conjugate and the ATG12-ATG5 conjugate to the pre-autophagosomal structure. Is also involved in endosome-to-Golgi retrograde transport as part of the VPS34 PI3-kinase complex II. This second complex is required for the endosome-to-Golgi retrieval of PEP1 and KEX2, and the recruitment of VPS5 and VPS7, two components of the retromer complex, to endosomal membranes (probably through the synthesis of a specific pool of phosphatidylinositol 3-phosphate recruiting the retromer to the endosomes). By regulating VPS34 kinase activity, VPS15 appears to be essential for the efficient delivery of soluble hydrolases to the yeast vacuole. May function as a G protein beta subunit to propagate the pheromone response at the endosome with GPA1. This Saccharomyces cerevisiae (strain ATCC 204508 / S288c) (Baker's yeast) protein is Serine/threonine-protein kinase VPS15.